The following is a 729-amino-acid chain: MLYKGDTLYLDWLEDGIAELVFDAPGSVNKLDTATVASLGQALEVLEKQHDLKGLLLRSNKAAFIVGADITEFLSLFLVPEEQLSQWLHFANSVFNRLEDLPVPTLAAVNGYALGGGCECVLATDYRLATPDLRIGLPETKLGIMPGFGGSVRLPRMLGADSALEIIAAGKDVGAEHALKIGLVDGVVKQEKLIEGAIAVLRQAITGDLDWRAKRQPKLEPLKLSKIEAAMSFTIAKGMVAQTAGKHYPAPMTAVKTIEAAARFGREEALNLENKSFVPLAHTNEARALVGIFLNDQYVKGKAKKLTKDIETPKQAAVLGAGIMGGGIAYQSAWKGVPVIMKDINDKSLNLGMTEAAKLLNKQLERGKIDGLKLAGVISTIHPTLDYAGFDRVDVVVEAVVENPKVKKAVLAETEQKVRPETVLASNTSTIPIGELASALERPENFCGMHFFNPVHRMPLVEIIRGEKSSDETIAKVVAWASKMGKTPIVVNDCPGFFVNRVLFPYFAGFSQLLRDGADFRKVDKVMEKQFGWPMGPAYLLDVVGIDTAHHAQAVMAAGFPQRMQKDYRDAIDALFDASRFGQKNGLGFWRYKEDSKGKPKKEEDAAVDDLLASVSQPKRDFSDDEIIARMMIPMINEVVRCLEEGIIASPAEADMALVYGLGFPPFHGGAFRWLDTQGSAKYLDMAQQYQHLGPLYEVPEGLRNKARHNEPYYPPVEPARPVGSLKTA.

The interval 1 to 189 is enoyl-CoA hydratase/isomerase; that stretch reads MLYKGDTLYL…KIGLVDGVVK (189 aa). A substrate-binding site is contributed by D296. The segment at 311–729 is 3-hydroxyacyl-CoA dehydrogenase; it reads ETPKQAAVLG…ARPVGSLKTA (419 aa). Residues M324, D343, 400-402, K407, and S429 each bind NAD(+); that span reads VVE. H450 serves as the catalytic For 3-hydroxyacyl-CoA dehydrogenase activity. Residue N453 participates in NAD(+) binding. The substrate site is built by N500 and Y660. Residues 708–729 are disordered; it reads RHNEPYYPPVEPARPVGSLKTA.

It in the N-terminal section; belongs to the enoyl-CoA hydratase/isomerase family. In the C-terminal section; belongs to the 3-hydroxyacyl-CoA dehydrogenase family. As to quaternary structure, heterotetramer of two alpha chains (FadB) and two beta chains (FadA).

The catalysed reaction is a (3S)-3-hydroxyacyl-CoA + NAD(+) = a 3-oxoacyl-CoA + NADH + H(+). It catalyses the reaction a (3S)-3-hydroxyacyl-CoA = a (2E)-enoyl-CoA + H2O. The enzyme catalyses a 4-saturated-(3S)-3-hydroxyacyl-CoA = a (3E)-enoyl-CoA + H2O. It carries out the reaction (3S)-3-hydroxybutanoyl-CoA = (3R)-3-hydroxybutanoyl-CoA. The catalysed reaction is a (3Z)-enoyl-CoA = a 4-saturated (2E)-enoyl-CoA. It catalyses the reaction a (3E)-enoyl-CoA = a 4-saturated (2E)-enoyl-CoA. It participates in lipid metabolism; fatty acid beta-oxidation. Involved in the aerobic and anaerobic degradation of long-chain fatty acids via beta-oxidation cycle. Catalyzes the formation of 3-oxoacyl-CoA from enoyl-CoA via L-3-hydroxyacyl-CoA. It can also use D-3-hydroxyacyl-CoA and cis-3-enoyl-CoA as substrate. The protein is Fatty acid oxidation complex subunit alpha of Salmonella typhimurium (strain LT2 / SGSC1412 / ATCC 700720).